Consider the following 241-residue polypeptide: Triosephosphate isomerase (241 aa).

9 to 11 (NWK) serves as a coordination point for substrate. His88 acts as the Electrophile in catalysis. The active-site Proton acceptor is Glu158. Substrate-binding positions include Gly164, Ser203, and 224 to 225 (GG).

It belongs to the triosephosphate isomerase family. Homodimer.

The protein resides in the cytoplasm. It catalyses the reaction D-glyceraldehyde 3-phosphate = dihydroxyacetone phosphate. It participates in carbohydrate biosynthesis; gluconeogenesis. Its pathway is carbohydrate degradation; glycolysis; D-glyceraldehyde 3-phosphate from glycerone phosphate: step 1/1. Its function is as follows. Involved in the gluconeogenesis. Catalyzes stereospecifically the conversion of dihydroxyacetone phosphate (DHAP) to D-glyceraldehyde-3-phosphate (G3P). In Dichelobacter nodosus (strain VCS1703A), this protein is Triosephosphate isomerase.